The primary structure comprises 440 residues: Gap junction alpha-8 protein (440 aa).

Residues 2 to 12 lie within the membrane without spanning it; it reads GDWSFLGNILE. Topologically, residues 13–21 are cytoplasmic; that stretch reads EVNEHSTVI. Residues 22 to 42 traverse the membrane as a helical segment; it reads GRVWLTVLFIFRILILGTAAE. Residues 43–71 are Extracellular-facing; it reads FVWGDEQSDFVCNTQQPGCENVCYDEAFP. Cystine bridges form between Cys54-Cys201, Cys61-Cys195, and Cys65-Cys190. A helical transmembrane segment spans residues 72 to 92; it reads ISHIRLWVLQIIFVSTPSLMY. The Cytoplasmic segment spans residues 93 to 161; sequence VGHAVHHVRM…GTLLRTYVCH (69 aa). The interval 111-143 is disordered; it reads AEELCQQSRSNGGERVPIAPDQASIRKSSSSSK. The helical transmembrane segment at 162-182 threads the bilayer; sequence IIFKTLFEVGFIVGHYFLYGF. Residues 183-210 lie on the Extracellular side of the membrane; the sequence is RILPLYRCSRWPCPNVVDCFVSRPTEKT. Residues 211–231 traverse the membrane as a helical segment; the sequence is IFILFMLSVAFVSLFLNIMEM. The Cytoplasmic segment spans residues 232-440; that stretch reads SHLGMKGIRS…SRARSDDLTI (209 aa). Positions 338–440 are disordered; sequence VEREEPPIEE…SRARSDDLTI (103 aa). Composition is skewed to basic and acidic residues over residues 353–364 and 374–399; these read VGEKKQEAEKVA and PDRERVETPGVGKEDEKEELQAEKVT. Over residues 423 to 432 the composition is skewed to low complexity; that stretch reads LSRLSKASSR.

The protein belongs to the connexin family. Alpha-type (group II) subfamily. As to quaternary structure, a hemichannel or connexon is composed of a hexamer of connexins. A functional gap junction is formed by the apposition of two hemichannels. Forms heteromeric channels with GJA3. As to expression, detected in eye lens (at protein level). Eye lens.

It is found in the cell membrane. The protein localises to the cell junction. The protein resides in the gap junction. Functionally, structural component of eye lens gap junctions. Gap junctions are dodecameric channels that connect the cytoplasm of adjoining cells. They are formed by the docking of two hexameric hemichannels, one from each cell membrane. Small molecules and ions diffuse from one cell to a neighboring cell via the central pore. This is Gap junction alpha-8 protein (Gja8) from Mus musculus (Mouse).